Reading from the N-terminus, the 412-residue chain is Multifunctional CCA protein (412 aa).

Positions 8 and 11 each coordinate ATP. Gly-8 and Arg-11 together coordinate CTP. The Mg(2+) site is built by Glu-21 and Asp-23. The ATP site is built by Arg-91, Arg-137, and Arg-140. 3 residues coordinate CTP: Arg-91, Arg-137, and Arg-140. In terms of domain architecture, HD spans 228–329; the sequence is TGIHTLMTLA…LKLFNAIDVW (102 aa).

Belongs to the tRNA nucleotidyltransferase/poly(A) polymerase family. Bacterial CCA-adding enzyme type 1 subfamily. In terms of assembly, monomer. Can also form homodimers and oligomers. The cofactor is Mg(2+). Ni(2+) serves as cofactor.

It carries out the reaction a tRNA precursor + 2 CTP + ATP = a tRNA with a 3' CCA end + 3 diphosphate. The enzyme catalyses a tRNA with a 3' CCA end + 2 CTP + ATP = a tRNA with a 3' CCACCA end + 3 diphosphate. Functionally, catalyzes the addition and repair of the essential 3'-terminal CCA sequence in tRNAs without using a nucleic acid template. Adds these three nucleotides in the order of C, C, and A to the tRNA nucleotide-73, using CTP and ATP as substrates and producing inorganic pyrophosphate. tRNA 3'-terminal CCA addition is required both for tRNA processing and repair. Also involved in tRNA surveillance by mediating tandem CCA addition to generate a CCACCA at the 3' terminus of unstable tRNAs. While stable tRNAs receive only 3'-terminal CCA, unstable tRNAs are marked with CCACCA and rapidly degraded. The sequence is that of Multifunctional CCA protein from Yersinia pseudotuberculosis serotype I (strain IP32953).